Reading from the N-terminus, the 348-residue chain is Ribonuclease H (348 aa).

Over residues Asn-54–Ala-65 the composition is skewed to polar residues. The disordered stretch occupies residues Asn-54–Arg-81. Residues Tyr-184–Ser-346 enclose the RNase H type-1 domain. Asp-193, Glu-235, Asp-264, and Asp-338 together coordinate Mg(2+).

It belongs to the RNase H family. Mg(2+) is required as a cofactor.

It catalyses the reaction Endonucleolytic cleavage to 5'-phosphomonoester.. Its function is as follows. Endonuclease that specifically degrades the RNA of RNA-DNA hybrids. This chain is Ribonuclease H (RNH1), found in Saccharomyces cerevisiae (strain ATCC 204508 / S288c) (Baker's yeast).